We begin with the raw amino-acid sequence, 231 residues long: Large ribosomal subunit protein uL1 (231 aa).

It belongs to the universal ribosomal protein uL1 family. In terms of assembly, part of the 50S ribosomal subunit.

Its function is as follows. Binds directly to 23S rRNA. The L1 stalk is quite mobile in the ribosome, and is involved in E site tRNA release. In terms of biological role, protein L1 is also a translational repressor protein, it controls the translation of the L11 operon by binding to its mRNA. The sequence is that of Large ribosomal subunit protein uL1 from Carboxydothermus hydrogenoformans (strain ATCC BAA-161 / DSM 6008 / Z-2901).